The chain runs to 550 residues: MESSRILITSALPYANGPLHFGHITGAYLPADVYARFQRLQGKEVLYICGSDEYGIAITLNAELAGMGYQEYVDMYHKLHKDTFKKLGISVDFFSRTTNTYHPAIVQDFYRNLQERGLVENQVTEQLYSEEEGKFLADRYVVGTCPKCGFDRARGDECQQCGADYEARDLKEPRSKLTGAALSLRDTEHAYLHLERMKEDLLAFVQGIYLRPHMRNFVTDYIEHLRPRAVTRDLSWGIPVPDLENKVFYVWFDAPIGYISGTMDWAASIGDPEAWKKFWLDDTVTYAQFIGKDNTSFHAAIFPAMEIGQSLPYKKVDALVTSEFLLLEGFQFSKSDGNFIDMDAFLETYSLDKLRYVLAAIAPETSDSEFSFQEFKTRCNSELVGKYGNFVNRVLAFAVKNGCTELSSPQLEQKDLDFISKSQKLAKDAAEHYAQYSLRKACSTIMELAALGNGYFNDEAPWKLAKEGNWNRVRAILFCACYCQKLLALISYPIMPETALKILEMIAPHSLDLGSQDPDRLQSLWTDSFFDYSEEKFSLKEPELLFTMVE.

The 'HIGH' region motif lies at 13-23; the sequence is PYANGPLHFGH. The Zn(2+) site is built by Cys-145, Cys-148, Cys-158, and Cys-161. The 'KMSKS' region motif lies at 331–335; sequence QFSKS. Lys-334 is a binding site for ATP.

This sequence belongs to the class-I aminoacyl-tRNA synthetase family. MetG type 1 subfamily. In terms of assembly, monomer. It depends on Zn(2+) as a cofactor.

Its subcellular location is the cytoplasm. The catalysed reaction is tRNA(Met) + L-methionine + ATP = L-methionyl-tRNA(Met) + AMP + diphosphate. In terms of biological role, is required not only for elongation of protein synthesis but also for the initiation of all mRNA translation through initiator tRNA(fMet) aminoacylation. The protein is Methionine--tRNA ligase (metG) of Chlamydia trachomatis serovar D (strain ATCC VR-885 / DSM 19411 / UW-3/Cx).